We begin with the raw amino-acid sequence, 1342 residues long: DNA-directed RNA polymerase subunit beta (1342 aa).

The protein belongs to the RNA polymerase beta chain family. In terms of assembly, the RNAP catalytic core consists of 2 alpha, 1 beta, 1 beta' and 1 omega subunit. When a sigma factor is associated with the core the holoenzyme is formed, which can initiate transcription.

It catalyses the reaction RNA(n) + a ribonucleoside 5'-triphosphate = RNA(n+1) + diphosphate. Its function is as follows. DNA-dependent RNA polymerase catalyzes the transcription of DNA into RNA using the four ribonucleoside triphosphates as substrates. The sequence is that of DNA-directed RNA polymerase subunit beta from Salmonella typhi.